The following is a 517-amino-acid chain: Glutamyl-tRNA(Gln) amidotransferase subunit A, mitochondrial (517 aa).

Active-site charge relay system residues include K58 and S131. A disordered region spans residues 106–132; sequence FGMGTHSTHSAHGPVASPAGRSAGGSS. The active-site Acyl-ester intermediate is the S155.

The protein belongs to the amidase family. GatA subfamily. In terms of assembly, subunit of the heterotrimeric GatCAB amidotransferase (AdT) complex, composed of A, B and C subunits.

It localises to the mitochondrion. The enzyme catalyses L-glutamyl-tRNA(Gln) + L-glutamine + ATP + H2O = L-glutaminyl-tRNA(Gln) + L-glutamate + ADP + phosphate + H(+). In terms of biological role, allows the formation of correctly charged Gln-tRNA(Gln) through the transamidation of misacylated Glu-tRNA(Gln) in the mitochondria. The reaction takes place in the presence of glutamine and ATP through an activated gamma-phospho-Glu-tRNA(Gln). This chain is Glutamyl-tRNA(Gln) amidotransferase subunit A, mitochondrial, found in Pyricularia oryzae (strain 70-15 / ATCC MYA-4617 / FGSC 8958) (Rice blast fungus).